A 938-amino-acid polypeptide reads, in one-letter code: ATP-dependent RNA helicase DDX42 (938 aa).

Positions Met-1–Gly-18 are enriched in gly residues. The disordered stretch occupies residues Met-1–Asp-114. Lys-5 is modified (N6-acetyllysine). Residue Arg-12 is modified to Omega-N-methylarginine. A compositionally biased stretch (low complexity) spans Ser-35–Ala-52. Ser-58 is modified (phosphoserine). Residues Asp-70–Ser-84 are compositionally biased toward acidic residues. Phosphoserine is present on residues Ser-96, Ser-104, Ser-109, and Ser-111. A coiled-coil region spans residues Leu-116 to Gln-157. Positions Glu-182–Ile-203 are disordered. Phosphoserine is present on Ser-185. A Q motif motif is present at residues Ser-253–Cys-281. The Helicase ATP-binding domain maps to Val-284–Val-459. Ala-297–Thr-304 is an ATP binding site. A DEAD box motif is present at residues Asp-407 to Asp-410. Residues Trp-487–Ala-632 enclose the Helicase C-terminal domain. Polar residues-rich tracts occupy residues Leu-737–Thr-757 and Gly-786–Glu-798. Residues Leu-737–Ser-938 are disordered. The interval Asn-738 to Arg-833 is necessary for interaction with TP53BP2. Residue Ser-754 is modified to Phosphoserine. Positions Ser-820 to Ala-920 are enriched in basic and acidic residues. Residue Lys-899 forms a Glycyl lysine isopeptide (Lys-Gly) (interchain with G-Cter in SUMO2) linkage.

It belongs to the DEAD box helicase family. DDX42 subfamily. In terms of assembly, transient component of the SF3B subcomplex of the 17S U2 SnRNP complex. Interacts (via the C-terminus) with TP53BP2; the interaction is not inhibitied by TP53BP2 ubiquitination and is independent of p53/TP53. In terms of tissue distribution, expressed in several cell lines (at protein level). Expressed in liver, lung, tonsil, thymus, muscle and pancreatic islets.

The protein resides in the cytoplasm. Its subcellular location is the nucleus. It is found in the cajal body. It localises to the nucleus speckle. It carries out the reaction ATP + H2O = ADP + phosphate + H(+). In terms of biological role, ATP-dependent RNA helicase that binds to partially double-stranded RNAs (dsRNAs) in order to unwind RNA secondary structures. Unwinding is promoted in the presence of single-strand binding proteins. Also mediates RNA duplex formation thereby displacing the single-strand RNA binding protein. ATP and ADP modulate its activity: ATP binding and hydrolysis by DDX42 triggers RNA strand separation, whereas the ADP-bound form of the protein triggers annealing of complementary RNA strands. Required for assembly of the 17S U2 SnRNP complex of the spliceosome, a large ribonucleoprotein complex that removes introns from transcribed pre-mRNAs: DDX42 associates transiently with the SF3B subcomplex of the 17S U2 SnRNP complex and is released after fulfilling its role in the assembly of 17S U2 SnRNP. Involved in the survival of cells by interacting with TP53BP2 and thereby counteracting the apoptosis-stimulating activity of TP53BP2. Relocalizes TP53BP2 to the cytoplasm. The protein is ATP-dependent RNA helicase DDX42 of Homo sapiens (Human).